The following is a 371-amino-acid chain: N-acetyldiaminopimelate deacetylase (371 aa).

Residue aspartate 68 is part of the active site. Glutamate 127 serves as the catalytic Proton acceptor.

The protein belongs to the peptidase M20A family. N-acetyldiaminopimelate deacetylase subfamily.

The catalysed reaction is N-acetyl-(2S,6S)-2,6-diaminopimelate + H2O = (2S,6S)-2,6-diaminopimelate + acetate. Its pathway is amino-acid biosynthesis; L-lysine biosynthesis via DAP pathway; LL-2,6-diaminopimelate from (S)-tetrahydrodipicolinate (acetylase route): step 3/3. Its function is as follows. Catalyzes the conversion of N-acetyl-diaminopimelate to diaminopimelate and acetate. The chain is N-acetyldiaminopimelate deacetylase from Oceanobacillus iheyensis (strain DSM 14371 / CIP 107618 / JCM 11309 / KCTC 3954 / HTE831).